Reading from the N-terminus, the 88-residue chain is Small ribosomal subunit protein uS17 (88 aa).

The protein belongs to the universal ribosomal protein uS17 family. As to quaternary structure, part of the 30S ribosomal subunit.

Functionally, one of the primary rRNA binding proteins, it binds specifically to the 5'-end of 16S ribosomal RNA. The polypeptide is Small ribosomal subunit protein uS17 (Mycoplasmopsis pulmonis (strain UAB CTIP) (Mycoplasma pulmonis)).